A 247-amino-acid chain; its full sequence is tRNA (guanine-N(1)-)-methyltransferase (247 aa).

S-adenosyl-L-methionine contacts are provided by residues Gly115 and 134-139 (IGDFVL).

This sequence belongs to the RNA methyltransferase TrmD family. As to quaternary structure, homodimer.

Its subcellular location is the cytoplasm. The catalysed reaction is guanosine(37) in tRNA + S-adenosyl-L-methionine = N(1)-methylguanosine(37) in tRNA + S-adenosyl-L-homocysteine + H(+). In terms of biological role, specifically methylates guanosine-37 in various tRNAs. This chain is tRNA (guanine-N(1)-)-methyltransferase, found in Anaeromyxobacter sp. (strain K).